A 1097-amino-acid polypeptide reads, in one-letter code: Protease Do-like 7 (1097 aa).

The tract at residues 55–243 (VLRTTACRAF…LPLQRVVRAL (189 aa)) is serine protease. Positions 269–366 (MTFLHKGFDE…RGGQPLSVSV (98 aa)) constitute a PDZ domain. His524 (charge relay system) is an active-site residue. Positions 546–556 (TSSGDGSQNDF) are enriched in polar residues. The disordered stretch occupies residues 546-577 (TSSGDGSQNDFGSEAKKQRVDEDSSDGIAANG). Residues 558-567 (SEAKKQRVDE) show a composition bias toward basic and acidic residues. Ser785 acts as the Charge relay system in catalysis.

The protein belongs to the peptidase S1C family.

The protein resides in the cytoplasm. Probable serine protease. This is Protease Do-like 7 (DEGP7) from Arabidopsis thaliana (Mouse-ear cress).